The following is a 271-amino-acid chain: Tritrans,polycis-undecaprenyl-diphosphate synthase (geranylgeranyl-diphosphate specific) (271 aa).

Aspartate 50 is an active-site residue. Aspartate 50 serves as a coordination point for Mg(2+). Residues 51 to 54 (GNRR), phenylalanine 55, histidine 67, and 95 to 97 (STE) each bind substrate. Asparagine 98 serves as the catalytic Proton acceptor. Substrate is bound by residues arginine 101, arginine 220, and 226 to 228 (RLS). Glutamate 239 is a Mg(2+) binding site.

It belongs to the UPP synthase family. In terms of assembly, homodimer. Mg(2+) is required as a cofactor.

It catalyses the reaction geranylgeranyl diphosphate + 7 isopentenyl diphosphate = tri-trans,hepta-cis-undecaprenyl diphosphate + 7 diphosphate. Catalyzes the sequential condensation of isopentenyl diphosphate (IPP) with geranylgeranyl diphosphate (GGPP) to yield (2Z,6Z,10Z,14Z,18Z,22Z,26Z,30E,34E,38E)-undecaprenyl diphosphate (tritrans,heptacis-UPP). It is probably the precursor of glycosyl carrier lipids. The sequence is that of Tritrans,polycis-undecaprenyl-diphosphate synthase (geranylgeranyl-diphosphate specific) from Methanopyrus kandleri (strain AV19 / DSM 6324 / JCM 9639 / NBRC 100938).